A 1383-amino-acid chain; its full sequence is DNA-directed RNA polymerase subunit beta (1383 aa).

Belongs to the RNA polymerase beta chain family. The RNAP catalytic core consists of 2 alpha, 1 beta, 1 beta' and 1 omega subunit. When a sigma factor is associated with the core the holoenzyme is formed, which can initiate transcription.

It catalyses the reaction RNA(n) + a ribonucleoside 5'-triphosphate = RNA(n+1) + diphosphate. In terms of biological role, DNA-dependent RNA polymerase catalyzes the transcription of DNA into RNA using the four ribonucleoside triphosphates as substrates. This is DNA-directed RNA polymerase subunit beta from Xanthomonas oryzae pv. oryzae (strain MAFF 311018).